Consider the following 505-residue polypeptide: Trans-cinnamate 4-monooxygenase (505 aa).

Residues 3-23 (LILLEKSLLAVFFAVIFSIIV) form a helical membrane-spanning segment. Residues 213-218 (RSRLAQ) and Ala306 each bind (E)-cinnamate. Cys447 contributes to the heme binding site.

This sequence belongs to the cytochrome P450 family. Heme serves as cofactor. In terms of tissue distribution, mostly expressed in stems, and, to a lower extent, in bulbs, roots, leaves and flowers.

It is found in the membrane. The catalysed reaction is (E)-cinnamate + reduced [NADPH--hemoprotein reductase] + O2 = (E)-4-coumarate + oxidized [NADPH--hemoprotein reductase] + H2O + H(+). The protein operates within alkaloid biosynthesis. It functions in the pathway phenylpropanoid metabolism; trans-4-coumarate biosynthesis; trans-4-coumarate from trans-cinnamate: step 1/1. Functionally, catalyzes the first oxidative step of the phenylpropanoid pathway in higher plants by transforming trans-cinnamate into p-coumarate. The compounds formed by this pathway are essential components for lignification, pollination, and defense against ultraviolet light, predators and pathogens. Trans-4-coumarate is a precursor to all amaryllidaceae alkaloids such as galanthamine, lycorine and haemanthamine, and including haemanthamine- and crinamine-type alkaloids, promising anticancer agents. The polypeptide is Trans-cinnamate 4-monooxygenase (Narcissus pseudonarcissus (Daffodil)).